The primary structure comprises 257 residues: Acetylglutamate kinase (257 aa).

Residues 43 to 44, Arg65, and Asn157 each bind substrate; that span reads GG. ATP contacts are provided by residues 180–185 and 208–210; these read DVSGIL and IIT.

Belongs to the acetylglutamate kinase family. ArgB subfamily. In terms of assembly, homodimer.

Its subcellular location is the cytoplasm. The catalysed reaction is N-acetyl-L-glutamate + ATP = N-acetyl-L-glutamyl 5-phosphate + ADP. Its pathway is amino-acid biosynthesis; L-arginine biosynthesis; N(2)-acetyl-L-ornithine from L-glutamate: step 2/4. Functionally, catalyzes the ATP-dependent phosphorylation of N-acetyl-L-glutamate. In Salmonella schwarzengrund (strain CVM19633), this protein is Acetylglutamate kinase.